Consider the following 204-residue polypeptide: Large ribosomal subunit protein bL25 (204 aa).

It belongs to the bacterial ribosomal protein bL25 family. CTC subfamily. Part of the 50S ribosomal subunit; part of the 5S rRNA/L5/L18/L25 subcomplex. Contacts the 5S rRNA. Binds to the 5S rRNA independently of L5 and L18.

In terms of biological role, this is one of the proteins that binds to the 5S RNA in the ribosome where it forms part of the central protuberance. The protein is Large ribosomal subunit protein bL25 of Pseudomonas syringae pv. syringae (strain B728a).